The following is a 245-amino-acid chain: Transmembrane protein 116 (245 aa).

4 helical membrane-spanning segments follow: residues 24–44 (MAFV…FCLG), 88–108 (GIAI…VLLI), 141–161 (FYPV…IIKL), and 173–195 (LYVL…YGWT).

It localises to the membrane. The chain is Transmembrane protein 116 (TMEM116) from Homo sapiens (Human).